A 118-amino-acid polypeptide reads, in one-letter code: D-dopachrome decarboxylase (118 aa).

N-acetylproline is present on P2. K33 is modified (N6-acetyllysine). S90 carries the phosphoserine modification.

Belongs to the MIF family. In terms of assembly, homotrimer.

The protein localises to the cytoplasm. It catalyses the reaction D-dopachrome + H(+) = 5,6-dihydroxyindole + CO2. In terms of biological role, tautomerization of D-dopachrome with decarboxylation to give 5,6-dihydroxyindole (DHI). The sequence is that of D-dopachrome decarboxylase (Ddt) from Mus musculus (Mouse).